The sequence spans 149 residues: MQIWVDADSVPLIAKDLIIKTAERTQTMAIFVANQPIKLRKSPLLVMTVVPSGFDKADDYIVEQIQPGDLAITSDIPLANDILDKGGMVLTTRGVVYDKNNIKQKLNMRDFMDTMRGTGVLELQEMSGQKPYGDRDKKAFADGLNKLVR.

Belongs to the UPF0178 family.

The sequence is that of UPF0178 protein Psyc_0274 from Psychrobacter arcticus (strain DSM 17307 / VKM B-2377 / 273-4).